The sequence spans 297 residues: Ribosomal RNA small subunit methyltransferase H (297 aa).

Residues 36-38 (GGH), Asp-56, Leu-90, Asp-104, and His-111 each bind S-adenosyl-L-methionine.

It belongs to the methyltransferase superfamily. RsmH family.

The protein localises to the cytoplasm. The enzyme catalyses cytidine(1402) in 16S rRNA + S-adenosyl-L-methionine = N(4)-methylcytidine(1402) in 16S rRNA + S-adenosyl-L-homocysteine + H(+). Functionally, specifically methylates the N4 position of cytidine in position 1402 (C1402) of 16S rRNA. The sequence is that of Ribosomal RNA small subunit methyltransferase H from Dictyoglomus thermophilum (strain ATCC 35947 / DSM 3960 / H-6-12).